A 76-amino-acid chain; its full sequence is Exodeoxyribonuclease 7 small subunit (76 aa).

This sequence belongs to the XseB family. In terms of assembly, heterooligomer composed of large and small subunits.

It localises to the cytoplasm. It catalyses the reaction Exonucleolytic cleavage in either 5'- to 3'- or 3'- to 5'-direction to yield nucleoside 5'-phosphates.. Bidirectionally degrades single-stranded DNA into large acid-insoluble oligonucleotides, which are then degraded further into small acid-soluble oligonucleotides. In Methylococcus capsulatus (strain ATCC 33009 / NCIMB 11132 / Bath), this protein is Exodeoxyribonuclease 7 small subunit.